A 149-amino-acid chain; its full sequence is Large ribosomal subunit protein bL9 (149 aa).

This sequence belongs to the bacterial ribosomal protein bL9 family.

Binds to the 23S rRNA. The sequence is that of Large ribosomal subunit protein bL9 from Shewanella amazonensis (strain ATCC BAA-1098 / SB2B).